The chain runs to 353 residues: Paraneoplastic antigen Ma1 homolog (353 aa).

It belongs to the PNMA family. Predominantly expressed in testis. Very low levels in the brain, including in the piriform cortex, hippocampus and some subcortical nuclei.

It is found in the nucleus. Its subcellular location is the nucleolus. This is Paraneoplastic antigen Ma1 homolog (Pnma1) from Mus musculus (Mouse).